The primary structure comprises 206 residues: Flavin reductase (NADPH) (206 aa).

NADP(+)-binding residues include Gly-10, Thr-12, Gly-13, Gln-14, Thr-15, Arg-35, Ser-38, and Arg-39. Ser-42 is subject to Phosphoserine. NADP(+)-binding residues include Asp-54, Val-55, Leu-75, Gly-76, and Arg-78. Ser-82 carries the post-translational modification Phosphoserine. Positions 87, 109, 132, 153, and 154 each coordinate NADP(+). The S-nitroso-cysteine intermediate; for S-nitroso-CoA-dependent nitrosyltransferase activity role is filled by Cys-109. Cys-188 (S-nitroso-cysteine intermediate; for S-nitroso-CoA-dependent nitrosyltransferase activity) is an active-site residue.

The protein belongs to the BLVRB family. As to quaternary structure, monomer. In terms of tissue distribution, predominantly expressed in liver and erythrocytes. At lower levels in heart, lung, adrenal gland and cerebrum. Expressed in adult red blood cells.

Its subcellular location is the cytoplasm. The enzyme catalyses reduced riboflavin + NADP(+) = riboflavin + NADPH + 2 H(+). The catalysed reaction is bilirubin IXbeta + NADP(+) = biliverdin IXbeta + NADPH + H(+). It carries out the reaction FMNH2 + NAD(+) = FMN + NADH + 2 H(+). It catalyses the reaction FMNH2 + NADP(+) = FMN + NADPH + 2 H(+). The enzyme catalyses S-nitroso-CoA + L-cysteinyl-[protein] = S-nitroso-L-cysteinyl-[protein] + CoA. The catalysed reaction is L-cysteinyl-[SCAN] + S-nitroso-CoA = S-nitroso-L-cysteinyl-[SCAN] + CoA. It carries out the reaction S-nitroso-L-cysteinyl-[SCAN] + L-cysteinyl-[protein] = L-cysteinyl-[SCAN] + S-nitroso-L-cysteinyl-[protein]. Its activity is regulated as follows. Mesobiliverdin acts as a competitive inhibitor for flavin reduction, indicating that flavin and tetrapyrrole substrates compete for the same site. Inhibited by a wide range of xanthene-based drugs, such as phloxine B, erythrosin B, tamibarotene, sulfasalazine, olsalazine, febuxostat, ataluren (PTC124) and deferasirox. Its function is as follows. Enzyme that can both act as a NAD(P)H-dependent reductase and a S-nitroso-CoA-dependent nitrosyltransferase. Promotes fetal heme degradation during development. Also expressed in adult tissues, where it acts as a regulator of hematopoiesis, intermediary metabolism (glutaminolysis, glycolysis, TCA cycle and pentose phosphate pathway) and insulin signaling. Has a broad specificity oxidoreductase activity by catalyzing the NAD(P)H-dependent reduction of a variety of flavins, such as riboflavin, FAD or FMN, biliverdins, methemoglobin and PQQ (pyrroloquinoline quinone). Contributes to fetal heme catabolism by catalyzing reduction of biliverdin IXbeta into bilirubin IXbeta in the liver. Biliverdin IXbeta, which constitutes the major heme catabolite in the fetus is not present in adult. Does not reduce bilirubin IXalpha. Can also reduce the complexed Fe(3+) iron to Fe(2+) in the presence of FMN and NADPH. Acts as a protein nitrosyltransferase by catalyzing nitrosylation of cysteine residues of target proteins, such as HMOX2, INSR and IRS1. S-nitroso-CoA-dependent nitrosyltransferase activity is mediated via a 'ping-pong' mechanism: BLVRB first associates with both S-nitroso-CoA and protein substrate, nitric oxide group is then transferred from S-nitroso-CoA to Cys-109 and Cys-188 residues of BLVRB and from S-nitroso-BLVRB to the protein substrate. Inhibits insulin signaling by mediating nitrosylation of INSR and IRS1, leading to their inhibition. This Homo sapiens (Human) protein is Flavin reductase (NADPH).